Here is a 125-residue protein sequence, read N- to C-terminus: Lymphocyte antigen 6 complex locus protein G6c (125 aa).

Residues 1-18 (MKALMLLTLSVLLCWVSA) form the signal peptide. Positions 20–111 (IRCHSCYKVP…PRPTPALGLV (92 aa)) constitute a UPAR/Ly6 domain. Cystine bridges form between Cys22–Cys47, Cys25–Cys33, and Cys39–Cys65. An N-linked (GlcNAc...) asparagine glycan is attached at Asn88. A disulfide bond links Cys92 and Cys97. Ser99 carries the GPI-anchor amidated serine lipid modification. Positions 100 to 125 (AGPRPTPALGLVFLTSLAGLGLWLLH) are cleaved as a propeptide — removed in mature form.

In terms of assembly, monomer. N-glycosylated. As to expression, highly expressed at the leading edges of cells, on filopodia.

The protein localises to the cell membrane. This Homo sapiens (Human) protein is Lymphocyte antigen 6 complex locus protein G6c (LY6G6C).